The sequence spans 358 residues: Phospho-N-acetylmuramoyl-pentapeptide-transferase (358 aa).

Helical transmembrane passes span 28 to 48, 70 to 90, 92 to 112, 133 to 153, 165 to 185, 196 to 216, 233 to 253, 260 to 280, 285 to 305, and 335 to 355; these read AALM…ITWL, TPTM…LLWA, LTNI…AVGF, MGGQ…NPDY, VTFD…VAAS, GLAI…IYIT, VGEV…FLWF, VFMG…LALL, LVLA…IVQV, and KIII…LSVL.

The protein belongs to the glycosyltransferase 4 family. MraY subfamily. Mg(2+) serves as cofactor.

Its subcellular location is the cell inner membrane. The enzyme catalyses UDP-N-acetyl-alpha-D-muramoyl-L-alanyl-gamma-D-glutamyl-meso-2,6-diaminopimeloyl-D-alanyl-D-alanine + di-trans,octa-cis-undecaprenyl phosphate = di-trans,octa-cis-undecaprenyl diphospho-N-acetyl-alpha-D-muramoyl-L-alanyl-D-glutamyl-meso-2,6-diaminopimeloyl-D-alanyl-D-alanine + UMP. It participates in cell wall biogenesis; peptidoglycan biosynthesis. Functionally, catalyzes the initial step of the lipid cycle reactions in the biosynthesis of the cell wall peptidoglycan: transfers peptidoglycan precursor phospho-MurNAc-pentapeptide from UDP-MurNAc-pentapeptide onto the lipid carrier undecaprenyl phosphate, yielding undecaprenyl-pyrophosphoryl-MurNAc-pentapeptide, known as lipid I. This Desulfovibrio desulfuricans (strain ATCC 27774 / DSM 6949 / MB) protein is Phospho-N-acetylmuramoyl-pentapeptide-transferase.